Reading from the N-terminus, the 814-residue chain is Telomere repeats-binding bouquet formation protein 1 (814 aa).

ARM repeat units lie at residues glutamate 93–arginine 136 and glycine 327–threonine 368. 3 disordered regions span residues aspartate 461 to arginine 521, serine 551 to aspartate 584, and phenylalanine 653 to asparagine 753. Residues glutamate 488–glutamate 512 adopt a coiled-coil conformation. 3 stretches are compositionally biased toward basic and acidic residues: residues arginine 499 to arginine 521, isoleucine 565 to arginine 577, and glutamate 679 to lysine 688. The segment covering glutamine 689–serine 699 has biased composition (basic residues). Over residues arginine 714–serine 741 the composition is skewed to basic and acidic residues. The region spanning glycine 746–glutamine 799 is the Myb-like domain.

It belongs to the TERB1 family. As to quaternary structure, component of the MAJIN-TERB1-TERB2 complex.

The protein resides in the chromosome. It is found in the telomere. The protein localises to the nucleus inner membrane. Meiosis-specific telomere-associated protein involved in meiotic telomere attachment to the nucleus inner membrane, a crucial step for homologous pairing and synapsis. Component of the MAJIN-TERB1-TERB2 complex, which promotes telomere cap exchange by mediating attachment of telomeric DNA to the inner nuclear membrane and replacement of the protective cap of telomeric chromosomes: in early meiosis, the MAJIN-TERB1-TERB2 complex associates with telomeric DNA and the shelterin/telosome complex. During prophase, the complex matures and promotes release of the shelterin/telosome complex from telomeric DNA. In the MAJIN-TERB1-TERB2 complex, TERB1 probably mediates association with the shelterin/telosome complex. This Danio rerio (Zebrafish) protein is Telomere repeats-binding bouquet formation protein 1 (ccdc79).